Consider the following 66-residue polypeptide: Large ribosomal subunit protein bL35 (66 aa).

2 stretches are compositionally biased toward basic residues: residues 1–15 (MSKLKTRSSAAKRFK) and 22–43 (ILHKKAGKRHNLSKKSESRKRR). Positions 1 to 43 (MSKLKTRSSAAKRFKVTATGKILHKKAGKRHNLSKKSESRKRR) are disordered.

Belongs to the bacterial ribosomal protein bL35 family.

This Dictyoglomus turgidum (strain DSM 6724 / Z-1310) protein is Large ribosomal subunit protein bL35.